The chain runs to 398 residues: Succinyl-diaminopimelate desuccinylase (398 aa).

H73 is a binding site for Zn(2+). D75 is an active-site residue. D106 is a Zn(2+) binding site. Residue E140 is the Proton acceptor of the active site. Zn(2+)-binding residues include E141, E169, and H366.

Belongs to the peptidase M20A family. DapE subfamily. Homodimer. Zn(2+) is required as a cofactor. Co(2+) serves as cofactor.

It carries out the reaction N-succinyl-(2S,6S)-2,6-diaminopimelate + H2O = (2S,6S)-2,6-diaminopimelate + succinate. Its pathway is amino-acid biosynthesis; L-lysine biosynthesis via DAP pathway; LL-2,6-diaminopimelate from (S)-tetrahydrodipicolinate (succinylase route): step 3/3. In terms of biological role, catalyzes the hydrolysis of N-succinyl-L,L-diaminopimelic acid (SDAP), forming succinate and LL-2,6-diaminopimelate (DAP), an intermediate involved in the bacterial biosynthesis of lysine and meso-diaminopimelic acid, an essential component of bacterial cell walls. This Agrobacterium fabrum (strain C58 / ATCC 33970) (Agrobacterium tumefaciens (strain C58)) protein is Succinyl-diaminopimelate desuccinylase.